Here is a 228-residue protein sequence, read N- to C-terminus: Urease accessory protein UreF 1 (228 aa).

The protein belongs to the UreF family. UreD, UreF and UreG form a complex that acts as a GTP-hydrolysis-dependent molecular chaperone, activating the urease apoprotein by helping to assemble the nickel containing metallocenter of UreC. The UreE protein probably delivers the nickel.

Its subcellular location is the cytoplasm. In terms of biological role, required for maturation of urease via the functional incorporation of the urease nickel metallocenter. In Brucella canis (strain ATCC 23365 / NCTC 10854 / RM-666), this protein is Urease accessory protein UreF 1.